Consider the following 320-residue polypeptide: Citrate synthase (320 aa).

Catalysis depends on residues H249 and D307.

Belongs to the citrate synthase family.

The catalysed reaction is oxaloacetate + acetyl-CoA + H2O = citrate + CoA + H(+). It functions in the pathway carbohydrate metabolism; tricarboxylic acid cycle; isocitrate from oxaloacetate: step 1/2. This is Citrate synthase (gltA) from Bartonella doshiae.